A 1791-amino-acid polypeptide reads, in one-letter code: Protein TIC 214 (1791 aa).

6 consecutive transmembrane segments (helical) span residues 19-39 (IINS…FSIG), 68-88 (FIAG…HLAL), 91-111 (PHTI…WNNH), 133-153 (VFLN…SSML), 176-196 (VGWL…LVWI), and 230-250 (IFSI…PSPI). Basic and acidic residues predominate over residues 257 to 271 (GTSETEERGGTKQDQ). Disordered regions lie at residues 257–278 (GTSE…TEEA) and 1498–1521 (ADQG…PNQE).

Belongs to the TIC214 family. Part of the Tic complex.

The protein localises to the plastid. It localises to the chloroplast inner membrane. Functionally, involved in protein precursor import into chloroplasts. May be part of an intermediate translocation complex acting as a protein-conducting channel at the inner envelope. The chain is Protein TIC 214 from Aethionema grandiflorum (Persian stone-cress).